The primary structure comprises 198 residues: Na(+)-translocating NADH-quinone reductase subunit E (198 aa).

6 consecutive transmembrane segments (helical) span residues 11 to 31 (SIFIENMALSFFLGMCTFLAV), 35 to 55 (VSTAFGLGIAVIVVLGIAVPA), 77 to 97 (FLNFITFIGVIAALVQILEMI), 110 to 130 (GIFLPLITVNCAIFGAVSFMV), 140 to 160 (VVYGIGAGTGWMLAIVALAGI), and 176 to 196 (LGITFISAGLMALGFMSFSGI).

It belongs to the NqrDE/RnfAE family. Composed of six subunits; NqrA, NqrB, NqrC, NqrD, NqrE and NqrF.

The protein resides in the cell inner membrane. It catalyses the reaction a ubiquinone + n Na(+)(in) + NADH + H(+) = a ubiquinol + n Na(+)(out) + NAD(+). Functionally, NQR complex catalyzes the reduction of ubiquinone-1 to ubiquinol by two successive reactions, coupled with the transport of Na(+) ions from the cytoplasm to the periplasm. NqrA to NqrE are probably involved in the second step, the conversion of ubisemiquinone to ubiquinol. This chain is Na(+)-translocating NADH-quinone reductase subunit E, found in Glaesserella parasuis serovar 5 (strain SH0165) (Haemophilus parasuis).